Reading from the N-terminus, the 104-residue chain is MQKIKKGDKVVVLSGRDKGRTGEVLKMMPKEDRALVRGVNLVRRHQKQTPQAEGGIITKEAPIHVSNLALADPKDGKPTRVGFKIQEDGKKVRVAKRSGELIDG.

Belongs to the universal ribosomal protein uL24 family. Part of the 50S ribosomal subunit.

In terms of biological role, one of two assembly initiator proteins, it binds directly to the 5'-end of the 23S rRNA, where it nucleates assembly of the 50S subunit. Functionally, one of the proteins that surrounds the polypeptide exit tunnel on the outside of the subunit. In Chelativorans sp. (strain BNC1), this protein is Large ribosomal subunit protein uL24.